The chain runs to 186 residues: NADH dehydrogenase [ubiquinone] 1 beta subcomplex subunit 8, mitochondrial (186 aa).

Residues 1-28 (MAVARAGVLGVQWLQRASRNVMPLGART) constitute a mitochondrion transit peptide. The helical transmembrane segment at 133–153 (LFGFLAFMIFMCWVGDVYPVY) threads the bilayer.

The protein belongs to the complex I NDUFB8 subunit family. In terms of assembly, complex I is composed of 45 different subunits.

The protein localises to the mitochondrion inner membrane. Its function is as follows. Accessory subunit of the mitochondrial membrane respiratory chain NADH dehydrogenase (Complex I), that is believed not to be involved in catalysis. Complex I functions in the transfer of electrons from NADH to the respiratory chain. The immediate electron acceptor for the enzyme is believed to be ubiquinone. This Pan troglodytes (Chimpanzee) protein is NADH dehydrogenase [ubiquinone] 1 beta subcomplex subunit 8, mitochondrial (NDUFB8).